Consider the following 300-residue polypeptide: Virginiamycin B lyase (300 aa).

Residue H231 participates in substrate binding. Mg(2+) is bound at residue E270. H272 acts as the Proton acceptor in catalysis. A Mg(2+)-binding site is contributed by E287.

This sequence belongs to the Vgb family. Monomer. It depends on Mg(2+) as a cofactor.

Functionally, inactivates the type B streptogramin antibiotics by linearizing the lactone ring at the ester linkage, generating a free phenylglycine carboxylate and converting the threonyl moiety into 2-amino-butenoic acid. In Saccharopolyspora erythraea (strain ATCC 11635 / DSM 40517 / JCM 4748 / NBRC 13426 / NCIMB 8594 / NRRL 2338), this protein is Virginiamycin B lyase.